The sequence spans 383 residues: Cytochrome b (383 aa).

The next 4 helical transmembrane spans lie at 32-52 (FGSL…FLAM), 76-98 (WLIR…CHIA), 113-133 (TWSI…LGYV), and 179-199 (FFSL…AHMI). Heme b contacts are provided by histidine 82 and histidine 96. Heme b is bound by residues histidine 183 and histidine 197. An a ubiquinone-binding site is contributed by histidine 202. Helical transmembrane passes span 225 to 245 (FIFK…IFVC), 289 to 309 (LLGV…PLTD), 321 to 341 (LMKL…WIGA), and 348 to 368 (YLEV…FIVP).

Belongs to the cytochrome b family. Fungal cytochrome b-c1 complex contains 10 subunits; 3 respiratory subunits, 2 core proteins and 5 low-molecular weight proteins. Cytochrome b-c1 complex is a homodimer. It depends on heme b as a cofactor.

It is found in the mitochondrion inner membrane. In terms of biological role, component of the ubiquinol-cytochrome c reductase complex (complex III or cytochrome b-c1 complex) that is part of the mitochondrial respiratory chain. The b-c1 complex mediates electron transfer from ubiquinol to cytochrome c. Contributes to the generation of a proton gradient across the mitochondrial membrane that is then used for ATP synthesis. The sequence is that of Cytochrome b (cob) from Schizophyllum commune (Split gill fungus).